Consider the following 396-residue polypeptide: Stearoyl-[acyl-carrier-protein] 9-desaturase, chloroplastic (396 aa).

A chloroplast-targeting transit peptide spans 1–32; sequence MALKLNPVTTFPSTRSLNNFSSRSPRTFLMAA. Fe cation-binding residues include Glu-138, Glu-176, His-179, Glu-229, Glu-262, and His-265.

Belongs to the fatty acid desaturase type 2 family. As to quaternary structure, homodimer. Requires Fe(2+) as cofactor.

It localises to the plastid. Its subcellular location is the chloroplast. It catalyses the reaction octadecanoyl-[ACP] + 2 reduced [2Fe-2S]-[ferredoxin] + O2 + 2 H(+) = (9Z)-octadecenoyl-[ACP] + 2 oxidized [2Fe-2S]-[ferredoxin] + 2 H2O. Its pathway is lipid metabolism; fatty acid metabolism. In terms of biological role, converts stearoyl-ACP to oleoyl-ACP by introduction of a cis double bond between carbons 9 and 10 of the acyl chain. The protein is Stearoyl-[acyl-carrier-protein] 9-desaturase, chloroplastic of Linum usitatissimum (Flax).